The following is a 672-amino-acid chain: DNA ligase (672 aa).

Residues 32–36 (DAEYD), 81–82 (SL), and glutamate 113 each bind NAD(+). Lysine 115 serves as the catalytic N6-AMP-lysine intermediate. Residues arginine 136, glutamate 173, lysine 290, and lysine 314 each coordinate NAD(+). Cysteine 408, cysteine 411, cysteine 426, and cysteine 432 together coordinate Zn(2+). Residues 594-672 (EIDSPFAGKT…EAEMLRLLGE (79 aa)) enclose the BRCT domain.

It belongs to the NAD-dependent DNA ligase family. LigA subfamily. Mg(2+) serves as cofactor. It depends on Mn(2+) as a cofactor.

It carries out the reaction NAD(+) + (deoxyribonucleotide)n-3'-hydroxyl + 5'-phospho-(deoxyribonucleotide)m = (deoxyribonucleotide)n+m + AMP + beta-nicotinamide D-nucleotide.. DNA ligase that catalyzes the formation of phosphodiester linkages between 5'-phosphoryl and 3'-hydroxyl groups in double-stranded DNA using NAD as a coenzyme and as the energy source for the reaction. It is essential for DNA replication and repair of damaged DNA. The chain is DNA ligase from Cronobacter sakazakii (strain ATCC BAA-894) (Enterobacter sakazakii).